The following is a 282-amino-acid chain: Protein canopy homolog 3 (282 aa).

An N-terminal signal peptide occupies residues 1 to 33 (MEPLPEPASGPRPRPHRLLLLSLLLLLLPLLPA). In terms of domain architecture, Saposin B-type spans 53–275 (SKCEVCKYVA…EGIQKASPLT (223 aa)). 3 disulfide bridges follow: Cys55–Cys212, Cys58–Cys200, and Cys110–Cys172. Asn159 is a glycosylation site (N-linked (GlcNAc...) asparagine). A coiled-coil region spans residues 159-185 (NETSAEVADLKKQCDVLVEEFEEVIED). The tract at residues 221-282 (KGDTAALGGK…PLTHSPPDEL (62 aa)) is disordered. The span at 255-266 (DLDGDPSPEEDE) shows a compositional bias: acidic residues.

The protein belongs to the canopy family. Interacts with HSP90B1; this interaction is disrupted in the presence of ATP. Interacts with TLR1, TLR2, TLR4 and TLR9.

It localises to the endoplasmic reticulum. Toll-like receptor (TLR)-specific co-chaperone for HSP90B1. Required for proper TLR folding, except that of TLR3, and hence controls TLR exit from the endoplasmic reticulum. Consequently, required for both innate and adaptive immune responses. This Bos taurus (Bovine) protein is Protein canopy homolog 3 (CNPY3).